The sequence spans 196 residues: dITP/XTP pyrophosphatase (196 aa).

Residue 7–12 (TGNAGK) coordinates substrate. Mg(2+) is bound by residues Glu-39 and Asp-68. The active-site Proton acceptor is Asp-68. Residues Ser-69, 153–156 (HGYD), Lys-176, and 181–182 (HR) each bind substrate.

It belongs to the HAM1 NTPase family. As to quaternary structure, homodimer. The cofactor is Mg(2+).

It catalyses the reaction XTP + H2O = XMP + diphosphate + H(+). It carries out the reaction dITP + H2O = dIMP + diphosphate + H(+). The enzyme catalyses ITP + H2O = IMP + diphosphate + H(+). In terms of biological role, pyrophosphatase that catalyzes the hydrolysis of nucleoside triphosphates to their monophosphate derivatives, with a high preference for the non-canonical purine nucleotides XTP (xanthosine triphosphate), dITP (deoxyinosine triphosphate) and ITP. Seems to function as a house-cleaning enzyme that removes non-canonical purine nucleotides from the nucleotide pool, thus preventing their incorporation into DNA/RNA and avoiding chromosomal lesions. This is dITP/XTP pyrophosphatase from Thioalkalivibrio sulfidiphilus (strain HL-EbGR7).